We begin with the raw amino-acid sequence, 2248 residues long: Zinc finger protein lin-13 (2248 aa).

Residues 1 to 189 (MDEFELFQQL…TYASQYSRPP (189 aa)) form a disordered region. The span at 29 to 38 (QQANNNQSAP) shows a compositional bias: polar residues. Basic and acidic residues predominate over residues 54 to 92 (KQREEEEAQRLADFMQKDMKEPAVKRKRGSEEYKKDPLE). Positions 145-155 (ELDENYMEENE) are enriched in acidic residues. The Required for interaction with hpl-2 isoform a signature appears at 440–444 (PLVPV). The C2H2-type 1 zinc-finger motif lies at 503-525 (HTCIKCGKTFGTEFMLKHHAQSH). The tract at residues 603–665 (KTKKENRNIT…FTSSKQKKKR (63 aa)) is disordered. A compositionally biased stretch (basic and acidic residues) spans 605–620 (KKENRNITDSNEKEFS). 6 consecutive C2H2-type zinc fingers follow at residues 812 to 837 (VRCI…SDVH), 959 to 982 (YSCS…TRFH), 1140 to 1162 (LMCY…MDDH), 1556 to 1578 (FKCQ…MRDH), 1601 to 1623 (WLCR…MAIH), and 1657 to 1680 (YSCG…SVAH). Over residues 1859-1877 (PRSSLQTNGSSMGSVTTNG) the composition is skewed to polar residues. The interval 1859–1900 (PRSSLQTNGSSMGSVTTNGGRVVRPSPPNSMNVTLRRAPPQQ) is disordered.

In terms of assembly, interacts (via PLVPV motif) with chromobox protein homolog hpl-2 (via chromo (shadow subtype) domain); the interaction is direct and influences localization of hpl-2 to nuclear foci. As to expression, in the L3 stage, expressed in syncytial hypodermal cell 7, body wall muscles, intestinal cells, distal tip cells and many neurons.

The protein resides in the nucleus. Functionally, involved in repression of vulval fate, possibly by a tumor suppressor protein Rb-mediated mechanism. May act in a common pathway with retinoblastoma-like protein homolog lin-35 and hpl-2 to influence the ER stress response in the intestine. Plays a role in recruiting chromobox protein homolog hpl-2 to specific chromatin sites. This Caenorhabditis elegans protein is Zinc finger protein lin-13 (lin-13).